The primary structure comprises 200 residues: MEILSAEFVVSNTKVEKCPQDNLPEYAFIGRSNVGKSSLINMLAKRPKLAMTSSTPGKTLLINHFLINKEWYLVDLPGYGYASRGKKQVEKIQQIIEDYILEREQMTNLFVLIDCRLEPQKIDLEFMEWLGENGVPFSIIFTKADKLTNGKVKDNVNKYLKKLTEQWEELPPHFVSSSEKKTGRQEILDYIDSINRSLKA.

Residues 22–197 (NLPEYAFIGR…LDYIDSINRS (176 aa)) form the EngB-type G domain. Residues 30–37 (GRSNVGKS), 57–61 (GKTLL), 75–78 (DLPG), 142–145 (TKAD), and 173–178 (HFVSSS) each bind GTP. Positions 37 and 59 each coordinate Mg(2+).

The protein belongs to the TRAFAC class TrmE-Era-EngA-EngB-Septin-like GTPase superfamily. EngB GTPase family. Mg(2+) serves as cofactor.

Its function is as follows. Necessary for normal cell division and for the maintenance of normal septation. This Phocaeicola vulgatus (strain ATCC 8482 / DSM 1447 / JCM 5826 / CCUG 4940 / NBRC 14291 / NCTC 11154) (Bacteroides vulgatus) protein is Probable GTP-binding protein EngB.